The primary structure comprises 205 residues: High frequency lysogenization protein HflD homolog (205 aa).

The protein belongs to the HflD family.

It is found in the cytoplasm. Its subcellular location is the cell inner membrane. This is High frequency lysogenization protein HflD homolog from Shewanella baltica (strain OS223).